A 274-amino-acid chain; its full sequence is 2,3,4,5-tetrahydropyridine-2,6-dicarboxylate N-succinyltransferase (274 aa).

Residues R104 and D141 each coordinate substrate.

This sequence belongs to the transferase hexapeptide repeat family. As to quaternary structure, homotrimer.

The protein resides in the cytoplasm. It carries out the reaction (S)-2,3,4,5-tetrahydrodipicolinate + succinyl-CoA + H2O = (S)-2-succinylamino-6-oxoheptanedioate + CoA. It functions in the pathway amino-acid biosynthesis; L-lysine biosynthesis via DAP pathway; LL-2,6-diaminopimelate from (S)-tetrahydrodipicolinate (succinylase route): step 1/3. The polypeptide is 2,3,4,5-tetrahydropyridine-2,6-dicarboxylate N-succinyltransferase (Escherichia coli O127:H6 (strain E2348/69 / EPEC)).